The chain runs to 661 residues: L-type lectin-domain containing receptor kinase V.5 (661 aa).

Positions 1–25 (MSRELIILCQPILVLFLTLFYNSHG) are cleaved as a signal peptide. At 26–282 (YFVSQGSVGI…KTSNRTKTVL (257 aa)) the chain is on the extracellular side. The interval 30-250 (QGSVGIGFNG…GAIHYLMGWL (221 aa)) is legume-lectin like. 5 N-linked (GlcNAc...) asparagine glycosylation sites follow: N45, N64, N116, N198, and N276. Residues 283-303 (AVCLTVSVFAAFVASWIGFVF) form a helical membrane-spanning segment. Residues 304-661 (YLRHKKVKEV…TDSSFVSHGR (358 aa)) lie on the Cytoplasmic side of the membrane. The Protein kinase domain maps to 338-596 (FKEKQLLGKG…LGVLCSHQAA (259 aa)). ATP-binding positions include 344 to 352 (LGKGGFGQV) and K367. D464 acts as the Proton acceptor in catalysis.

In the C-terminal section; belongs to the protein kinase superfamily. Ser/Thr protein kinase family. The protein in the N-terminal section; belongs to the leguminous lectin family. In terms of processing, autophosphorylated on a Ser residue. In terms of tissue distribution, expressed at low levels in stems, leaves, flowers and siliques.

It localises to the cell membrane. It catalyses the reaction L-seryl-[protein] + ATP = O-phospho-L-seryl-[protein] + ADP + H(+). The enzyme catalyses L-threonyl-[protein] + ATP = O-phospho-L-threonyl-[protein] + ADP + H(+). Confers resistance to the pathogenic oomycetes Phytophthora infestans and Phytophthora capsici, but confers susceptibility to the pathogenic bacteria Pseudomonas syringae. This is L-type lectin-domain containing receptor kinase V.5 from Arabidopsis thaliana (Mouse-ear cress).